The primary structure comprises 289 residues: UPF0725 protein At1g27860 (289 aa).

The interval 266–289 is disordered; it reads DQQRSMTLPSGEQAESSKKRPRLS. The span at 268–279 shows a compositional bias: polar residues; sequence QRSMTLPSGEQA.

The protein belongs to the UPF0725 (EMB2204) family.

This Arabidopsis thaliana (Mouse-ear cress) protein is UPF0725 protein At1g27860.